The primary structure comprises 38 residues: Large ribosomal subunit protein bL12 (38 aa).

This sequence belongs to the bacterial ribosomal protein bL12 family. In terms of assembly, homodimer. Part of the ribosomal stalk of the 50S ribosomal subunit. Forms a multimeric L10(L12)X complex, where L10 forms an elongated spine to which 2 to 4 L12 dimers bind in a sequential fashion. Binds GTP-bound translation factors.

Its function is as follows. Forms part of the ribosomal stalk which helps the ribosome interact with GTP-bound translation factors. Is thus essential for accurate translation. In Salinivibrio costicola (Vibrio costicola), this protein is Large ribosomal subunit protein bL12 (rplL).